The following is a 383-amino-acid chain: D-aspartate oxidase 3 (383 aa).

Positions 1–17 (MLYALLLLFGGVSTVSS) are cleaved as a signal peptide. FAD-binding residues include lysine 56 and serine 63. Asparagine 152, asparagine 271, and asparagine 320 each carry an N-linked (GlcNAc...) asparagine glycan. FAD is bound at residue threonine 339. N-linked (GlcNAc...) asparagine glycosylation is present at asparagine 371.

Belongs to the DAMOX/DASOX family. The cofactor is FAD. As to expression, in both sexes, present in coelomocytes (at protein level). Expressed in hypodermal cells and the proximal gonadal sheath cells in adult hermaphrodites (at protein level). Also expressed in probable head mesodermal cells and unidentified cells in the head, and vulval muscles in adult hermaphrodites. Expressed in the seminal vesicle, spicule and tail cells in adult males (at protein level).

It is found in the secreted. The enzyme catalyses D-aspartate + O2 + H2O = oxaloacetate + H2O2 + NH4(+). It carries out the reaction D-glutamate + O2 + H2O = H2O2 + 2-oxoglutarate + NH4(+). Selectively catalyzes the oxidative deamination of acidic amino acids. Plays a role in the egg-laying events and maturation processes of the reproductive organs. The sequence is that of D-aspartate oxidase 3 (ddo-3) from Caenorhabditis elegans.